We begin with the raw amino-acid sequence, 1770 residues long: MESQQLHQNPHSLHGSAAASVTSKEVPSNQDPLAVSASNLPEFDRDSTKVNSQQETTPGTSAVPENHHHVSPQPASVPPPQNGQYQQHGMMTPNKAMASNWAHYQQPSMMTCSHYQTSPAYYQPDPHYPLPQYIPPLSTSSPDPIDSQNQHSEVPQAKTKVRNNVLPPHTLTSEENFSTWVKFYIRFLKNSNLGDIIPNDQGEIKRQMTYEEHAYIYNTFQAFAPFHLLPTWVKQILEINYADILTVLCKSVSKMQTNNQELKDWIALANLEYDGSTSADTFEITVSTIIQRLKENNINVSDRLACQLILKGLSGDFKYLRNQYRTKTNMKLSQLFAEIQLIYDENKIMNLNKPSQYKQHSEYKNVSRTSPNTTNTKVTSRNYHRTNSSKPRAAKAHNIATSSKFSRVNNDHINESTVSSQYLSDDNELSLGQQQKESKPTRTIDSNDELPDHLLIDSGASQTLVRSAHYLHHATPNSEINIVDAQKQDIPINAIGNLHFNFQNGTKTSIKALHTPNIAYDLLSLSELANQNITACFTRNTLERSDGTVLAPIVKHGDFYWLSKKYLIPSHISKLTINNVNKSKSVNKYPYPLIHRMLGHANFRSIQKSLKKNAVTYLKESDIEWSNASTYQCPDCLIGKSTKHRHIKGSRLKYQESYEPFQYLHTDIFGPVHHLPKSAPSYFISFTDEKTRFQWVYPLHDRREESILNVFTSILAFIKNQFNARVLVIQMDRGSEYTNKTLHKFFTNRGITACYTTTADSRAHGVAERLNRTLLNDCRTLLHCSGLPNHLWFSAVEFSTIIRNSLVSPKNDKSARQHAGLAGLDITTILPFGQPVIVNNHNPDSKIHPRGIPGYALHPSRNSYGYIIYLPSLKKTVDTTNYVILQDNQSKLDQFNYDTLTFDDDLNRLTAHNQSFIEQNETEQSYDQNTESDHDYQSEIEINSDPLVNDFSSQSLNPLQLDKEPVQKVRAPKEVDADISEYNILPSTIRSRTPHIINKESTEMGGTIESDTTSPRHSSTFTARNQKRPGSPNDMIDLTSQDRVNYGLENIKTTRLGGTEEPYIQRNSDTNIKYRTTNSTPSIDDRSSNSESTTPIISIETKAVCDNTPSIDTDPPEYRSSDHATPNIMPDKSSKNVTADSILDDLPLPDLTNKSPTDTSDVSKDIPHIHSRQTNSSLGGMDDSNVLTTTKSKKRSLEDNETEIEVSRDTWNNKNMRSLEPPRSKKRINLIAAIKGVKSIKPVRTTLRYDEAITYNKDNKEKDRYVEAYHKEISQLLKMNTWDTNKYYDRNDIDPKKVINSMFIFNKKRDGTHKARFVARGDIQHPDTYDSDMQSNTVHHYALMTSLSIALDNDYYITQLDISSAYLYADIKEELYIRPPPHLGLNDKLLRLRKSLYGLKQSGANWYETIKSYLINCCDMQEVRGWSCVFKNSQVTICLFVDDMILFSKDLNANKKIITTLKKQYDTKIINLGEGDNEIQYDILGLEIKYQRSKYMKLGMEKSLTEKLPKLNVPLNPKGKKLRAPGQPGHYIDQDELEIDEDEYKEKVHEMQKLIGLASYVGYKFRFDLLYYINTLAQHILFPSRQVLDMTYELIQFIWNTRDKQLIWHKSKPVKPTNKLVVISDASYGNQPYYKSQIGNIYLLNGKVIGGKSTKASLTCTSTTEAEIHAVSEAIPLLNNLSHLVQELNKKPIIKGLLTDSRSTISIIKSTNEEKFRNRFFGTKAMRLRDEVSGNNLYVYYIETKMNIADVMTKPLPIKTFKLLTNKWIH.

Composition is skewed to polar residues over residues 1–11 (MESQQLHQNPH), 19–39 (ASVT…SASN), 49–60 (KVNSQQETTPGT), 366–390 (VSRT…NSSK), 399–408 (IATSSKFSRV), and 415–435 (ESTV…GQQQ). Disordered stretches follow at residues 1 to 89 (MESQ…QQHG) and 355 to 449 (SQYK…SNDE). The segment at 295–397 (ENNINVSDRL…SSKPRAAKAH (103 aa)) is RNA-binding. The active-site For protease activity; shared with dimeric partner is D457. An integrase-type zinc finger-like region spans residues 579-636 (NVNKSKSVNKYPYPLIHRMLGHANFRSIQKSLKKNAVTYLKESDIEWSNASTYQCPDC). The Integrase catalytic domain occupies 656–831 (ESYEPFQYLH…AGLDITTILP (176 aa)). Mg(2+)-binding residues include D667 and D732. Disordered regions lie at residues 1005–1038 (GGTI…MIDL) and 1057–1205 (GGTE…TEIE). Composition is skewed to polar residues over residues 1009–1024 (ESDT…FTAR) and 1065–1082 (QRNS…STPS). Residues 1193–1227 (KKRSLEDNETEIEVSRDTWNNKNMRSLEPPRSKKR) carry the Bipartite nuclear localization signal motif. One can recognise a Reverse transcriptase Ty1/copia-type domain in the interval 1353-1491 (NDYYITQLDI…DILGLEIKYQ (139 aa)). 6 residues coordinate Mg(2+): D1361, D1442, D1443, D1625, E1667, and D1700. An RNase H Ty1/copia-type domain is found at 1625–1767 (DASYGNQPYY…IKTFKLLTNK (143 aa)).

As to quaternary structure, the capsid protein forms a homotrimer, from which the VLPs are assembled. The protease is a homodimer, whose active site consists of two apposed aspartic acid residues. In terms of processing, initially, virus-like particles (VLPs) are composed of the structural unprocessed proteins Gag and Gag-Pol, and also contain the host initiator methionine tRNA (tRNA(i)-Met) which serves as a primer for minus-strand DNA synthesis, and a dimer of genomic Ty RNA. Processing of the polyproteins occurs within the particle and proceeds by an ordered pathway, called maturation. First, the protease (PR) is released by autocatalytic cleavage of the Gag-Pol polyprotein, and this cleavage is a prerequisite for subsequent processing at the remaining sites to release the mature structural and catalytic proteins. Maturation takes place prior to the RT reaction and is required to produce transposition-competent VLPs.

The protein resides in the cytoplasm. The protein localises to the nucleus. The catalysed reaction is DNA(n) + a 2'-deoxyribonucleoside 5'-triphosphate = DNA(n+1) + diphosphate. The enzyme catalyses Endonucleolytic cleavage to 5'-phosphomonoester.. Functionally, capsid protein (CA) is the structural component of the virus-like particle (VLP), forming the shell that encapsulates the retrotransposons dimeric RNA genome. The particles are assembled from trimer-clustered units and there are holes in the capsid shells that allow for the diffusion of macromolecules. CA also has nucleocapsid-like chaperone activity, promoting primer tRNA(i)-Met annealing to the multipartite primer-binding site (PBS), dimerization of Ty2 RNA and initiation of reverse transcription. The aspartyl protease (PR) mediates the proteolytic cleavages of the Gag and Gag-Pol polyproteins after assembly of the VLP. Its function is as follows. Reverse transcriptase/ribonuclease H (RT) is a multifunctional enzyme that catalyzes the conversion of the retro-elements RNA genome into dsDNA within the VLP. The enzyme displays a DNA polymerase activity that can copy either DNA or RNA templates, and a ribonuclease H (RNase H) activity that cleaves the RNA strand of RNA-DNA heteroduplexes during plus-strand synthesis and hydrolyzes RNA primers. The conversion leads to a linear dsDNA copy of the retrotransposon that includes long terminal repeats (LTRs) at both ends. In terms of biological role, integrase (IN) targets the VLP to the nucleus, where a subparticle preintegration complex (PIC) containing at least integrase and the newly synthesized dsDNA copy of the retrotransposon must transit the nuclear membrane. Once in the nucleus, integrase performs the integration of the dsDNA into the host genome. The protein is Transposon Ty2-DR3 Gag-Pol polyprotein (TY2B-DR3) of Saccharomyces cerevisiae (strain ATCC 204508 / S288c) (Baker's yeast).